Reading from the N-terminus, the 90-residue chain is Barrier-to-autointegration factor-like protein (90 aa).

This sequence belongs to the BAF family. As to quaternary structure, homodimer. Heterodimerizes with BANF1. Expressed strongly in testis and pancreas. Also detected in brain, colon, liver, lung, ovary, placenta, prostate, small intestine, spleen and thymus. Not detected in heart, kidney and skeletal muscle.

The protein resides in the nucleus. The protein localises to the cytoplasm. In terms of biological role, may play a role in BANF1 regulation and influence tissue-specific roles of BANF1. This chain is Barrier-to-autointegration factor-like protein (BANF2), found in Homo sapiens (Human).